A 228-amino-acid chain; its full sequence is Translin (228 aa).

Positions 86–90 (RFHEH) are DNA/RNA binding. The tract at residues 177 to 198 (LDSGFRLLNLKNDSLRKRYDGL) is leucine-zipper. Lys-187 is subject to N6-acetyllysine. Ser-190 is modified (phosphoserine). N6-acetyllysine is present on Lys-199.

This sequence belongs to the translin family. Ring-shaped heterooctamer of six TSN and two TSNAX subunits, DNA/RNA binding occurs inside the ring.

The protein resides in the cytoplasm. It localises to the nucleus. Its function is as follows. DNA-binding protein that specifically recognizes consensus sequences at the breakpoint junctions in chromosomal translocations, mostly involving immunoglobulin (Ig)/T-cell receptor gene segments. Seems to recognize single-stranded DNA ends generated by staggered breaks occurring at recombination hot spots. Functionally, exhibits both single-stranded and double-stranded endoribonuclease activity. May act as an activator of RNA-induced silencing complex (RISC) by facilitating endonucleolytic cleavage of the siRNA passenger strand. This Mus musculus (Mouse) protein is Translin (Tsn).